A 680-amino-acid polypeptide reads, in one-letter code: Oligopeptidase A (680 aa).

His469 lines the Zn(2+) pocket. Residue Glu470 is part of the active site. 2 residues coordinate Zn(2+): His473 and His476.

It belongs to the peptidase M3 family. Requires Zn(2+) as cofactor.

It carries out the reaction Hydrolysis of oligopeptides, with broad specificity. Gly or Ala commonly occur as P1 or P1' residues, but more distant residues are also important, as is shown by the fact that Z-Gly-Pro-Gly-|-Gly-Pro-Ala is cleaved, but not Z-(Gly)(5).. Its function is as follows. May play a specific role in the degradation of signal peptides after they are released from precursor forms of secreted proteins. Can cleave N-acetyl-L-Ala(4). The polypeptide is Oligopeptidase A (prlC) (Escherichia coli (strain K12)).